A 185-amino-acid chain; its full sequence is Thiol:disulfide interchange protein DsbE (185 aa).

Over 1-4 (MKRN) the chain is Cytoplasmic. Residues 5-25 (VLLLPLLIFLLIAAALLWQLA) traverse the membrane as a helical segment. Residues 26–185 (RNAQGDDPTN…WDRYSREAAQ (160 aa)) lie on the Periplasmic side of the membrane. Positions 39-177 (ALTGKPVPAF…WESELKPLWD (139 aa)) constitute a Thioredoxin domain. A disulfide bond links C80 and C83.

The protein belongs to the thioredoxin family. DsbE subfamily.

Its subcellular location is the cell inner membrane. Its function is as follows. Involved in disulfide bond formation. Catalyzes a late, reductive step in the assembly of periplasmic c-type cytochromes, probably the reduction of disulfide bonds of the apocytochrome c to allow covalent linkage with the heme. Possible subunit of a heme lyase. The polypeptide is Thiol:disulfide interchange protein DsbE (dsbE1) (Salmonella typhi).